Here is a 613-residue protein sequence, read N- to C-terminus: Acetylcholinesterase (613 aa).

An N-terminal signal peptide occupies residues 1-30; the sequence is MRPPWCPLHTPSLTPPLLLLLFLIGGGAEA. N-linked (GlcNAc...) asparagine glycosylation is present at asparagine 91. The cysteines at positions 99 and 126 are disulfide-linked. Serine 233 functions as the Acyl-ester intermediate in the catalytic mechanism. A disulfide bond links cysteine 287 and cysteine 302. An N-linked (GlcNAc...) asparagine glycan is attached at asparagine 295. Glutamate 364 (charge relay system) is an active-site residue. Residue asparagine 380 is glycosylated (N-linked (GlcNAc...) asparagine). A disulfide bridge links cysteine 439 with cysteine 559. Histidine 477 acts as the Charge relay system in catalysis. N-linked (GlcNAc...) asparagine glycosylation is present at asparagine 494.

The protein belongs to the type-B carboxylesterase/lipase family. Interacts with PRIMA1. The interaction with PRIMA1 is required to anchor it to the basal lamina of cells and organize into tetramers. Isoform H generates GPI-anchored dimers; disulfide linked. Isoform T generates multiple structures, ranging from monomers and dimers to collagen-tailed and hydrophobic-tailed forms, in which catalytic tetramers are associated with anchoring proteins that attach them to the basal lamina or to cell membranes. In the collagen-tailed forms, isoform T subunits are associated with a specific collagen, COLQ, which triggers the formation of isoform T tetramers, from monomers and dimers.

It is found in the synapse. It localises to the secreted. The protein localises to the cell membrane. It catalyses the reaction acetylcholine + H2O = choline + acetate + H(+). Functionally, terminates signal transduction at the neuromuscular junction by rapid hydrolysis of the acetylcholine released into the synaptic cleft. This Bos taurus (Bovine) protein is Acetylcholinesterase (ACHE).